A 1217-amino-acid polypeptide reads, in one-letter code: WD repeat-containing protein on Y chromosome (1217 aa).

WD repeat units follow at residues 155 to 199, 323 to 362, 366 to 405, 456 to 495, 508 to 547, 595 to 635, 740 to 779, and 823 to 862; these read EDMT…LRSA, RIPL…EPSA, GHNG…LLQT, THAA…RKII, TIDI…VVRN, FHTD…RRYN, KVGD…IPEA, and GHLK…LGTL. 2 disordered regions span residues 910–929 and 1033–1217; these read QVKR…VEDT and AGGQ…KDKP. Residues 919–929 show a composition bias toward acidic residues; that stretch reads EREDEGEVEDT. Composition is skewed to polar residues over residues 1041–1054, 1085–1107, and 1137–1179; these read RASS…TNSI, FGPN…SQLK, and PVST…TSAN. Positions 1181–1190 are enriched in low complexity; the sequence is KPDIMPVKIK. Over residues 1198 to 1210 the composition is skewed to polar residues; that stretch reads RNTAPVQITTSIA.

The protein is WD repeat-containing protein on Y chromosome of Drosophila mojavensis (Fruit fly).